The chain runs to 455 residues: Putative RNA polymerase II subunit B1 CTD phosphatase rpap-2 (455 aa).

The RTR1-type zinc finger occupies 36–121 (EHLPHLHCLG…LDEHPLWITG (86 aa)). Residues Cys59, Cys64, Cys97, and Cys101 each contribute to the Zn(2+) site.

This sequence belongs to the RPAP2 family.

The protein resides in the nucleus. It catalyses the reaction O-phospho-L-seryl-[protein] + H2O = L-seryl-[protein] + phosphate. It carries out the reaction O-phospho-L-threonyl-[protein] + H2O = L-threonyl-[protein] + phosphate. Putative RNA polymerase II subunit B1 C-terminal domain (CTD) phosphatase involved in RNA polymerase II transcription regulation. This chain is Putative RNA polymerase II subunit B1 CTD phosphatase rpap-2, found in Caenorhabditis elegans.